The following is a 482-amino-acid chain: uncharacterized protein (482 aa).

Residues 231 to 459 (FEGNAGFYEI…FDACNHYLID (229 aa)) form the AB hydrolase-1 domain.

This is an uncharacterized protein from Caenorhabditis elegans.